A 937-amino-acid chain; its full sequence is Isoleucine--tRNA ligase (937 aa).

Residues 57–67 (PYANGPIHMGH) carry the 'HIGH' region motif. E556 contributes to the L-isoleucyl-5'-AMP binding site. The short motif at 597–601 (KMSKS) is the 'KMSKS' region element. An ATP-binding site is contributed by K600. Positions 895, 898, 915, and 918 each coordinate Zn(2+).

It belongs to the class-I aminoacyl-tRNA synthetase family. IleS type 1 subfamily. As to quaternary structure, monomer. It depends on Zn(2+) as a cofactor.

Its subcellular location is the cytoplasm. The enzyme catalyses tRNA(Ile) + L-isoleucine + ATP = L-isoleucyl-tRNA(Ile) + AMP + diphosphate. Functionally, catalyzes the attachment of isoleucine to tRNA(Ile). As IleRS can inadvertently accommodate and process structurally similar amino acids such as valine, to avoid such errors it has two additional distinct tRNA(Ile)-dependent editing activities. One activity is designated as 'pretransfer' editing and involves the hydrolysis of activated Val-AMP. The other activity is designated 'posttransfer' editing and involves deacylation of mischarged Val-tRNA(Ile). The sequence is that of Isoleucine--tRNA ligase from Levilactobacillus brevis (strain ATCC 367 / BCRC 12310 / CIP 105137 / JCM 1170 / LMG 11437 / NCIMB 947 / NCTC 947) (Lactobacillus brevis).